A 955-amino-acid chain; its full sequence is 2-oxoglutarate dehydrogenase E1 component (955 aa).

It belongs to the alpha-ketoglutarate dehydrogenase family. As to quaternary structure, homodimer. Part of the 2-oxoglutarate dehydrogenase (OGDH) complex composed of E1 (2-oxoglutarate dehydrogenase), E2 (dihydrolipoamide succinyltransferase) and E3 (dihydrolipoamide dehydrogenase); the complex contains multiple copies of the three enzymatic components (E1, E2 and E3). Thiamine diphosphate is required as a cofactor.

It catalyses the reaction N(6)-[(R)-lipoyl]-L-lysyl-[protein] + 2-oxoglutarate + H(+) = N(6)-[(R)-S(8)-succinyldihydrolipoyl]-L-lysyl-[protein] + CO2. In terms of biological role, E1 component of the 2-oxoglutarate dehydrogenase (OGDH) complex which catalyzes the decarboxylation of 2-oxoglutarate, the first step in the conversion of 2-oxoglutarate to succinyl-CoA and CO(2). The polypeptide is 2-oxoglutarate dehydrogenase E1 component (Bacillus cereus (strain AH820)).